Here is a 704-residue protein sequence, read N- to C-terminus: Transmembrane protein DDB_G0274347 (704 aa).

The disordered stretch occupies residues 37 to 145 (VEQRDEVNDE…NNYNNNNTPT (109 aa)). Positions 43–67 (VNDEFQEEEEELEDDDDDEDDEDEI) are enriched in acidic residues. Residues 85 to 99 (HNDKEKEKKKDKQEE) are compositionally biased toward basic and acidic residues. A compositionally biased stretch (acidic residues) spans 100-113 (YIDSDDDDDDDGDE). A compositionally biased stretch (low complexity) spans 114 to 142 (NYYLNNNNNNNNNINNNNNYNNNNYNNNN). N-linked (GlcNAc...) asparagine glycosylation occurs at Asn166. A helical transmembrane segment spans residues 255–275 (ALISMALLISLVAIIFYLPLP). An N-linked (GlcNAc...) asparagine glycan is attached at Asn354. Transmembrane regions (helical) follow at residues 370 to 390 (LKIF…WLFA), 414 to 434 (TLLV…LYFI), and 513 to 533 (LVSF…FLIS). The segment covering 550-565 (TTTTTINTTTNTTSNT) has biased composition (low complexity). The interval 550 to 576 (TTTTTINTTTNTTSNTSQQSNPLSKRL) is disordered. N-linked (GlcNAc...) asparagine glycans are attached at residues Asn556, Asn560, and Asn564. Residues 566 to 576 (SQQSNPLSKRL) are compositionally biased toward polar residues. Helical transmembrane passes span 609–629 (FIIV…GVPP) and 638–658 (IFFI…LIII).

It is found in the membrane. The protein is Transmembrane protein DDB_G0274347 of Dictyostelium discoideum (Social amoeba).